Reading from the N-terminus, the 501-residue chain is Lysine--tRNA ligase (501 aa).

The Mg(2+) site is built by Glu-410 and Glu-417.

Belongs to the class-II aminoacyl-tRNA synthetase family. In terms of assembly, homodimer. Mg(2+) serves as cofactor.

It localises to the cytoplasm. The catalysed reaction is tRNA(Lys) + L-lysine + ATP = L-lysyl-tRNA(Lys) + AMP + diphosphate. The sequence is that of Lysine--tRNA ligase from Shewanella pealeana (strain ATCC 700345 / ANG-SQ1).